The following is a 200-amino-acid chain: ADP-ribosylation factor-like protein 4D (200 aa).

G2 carries N-myristoyl glycine lipidation. GTP-binding positions include 27 to 34, 75 to 79, and 134 to 137; these read GLDSAGKT, DVGGQ, and NKQD.

It belongs to the small GTPase superfamily. Arf family. As to quaternary structure, interacts with CYTH2; the interaction is direct and ARL4D GTP-dependent. Does not interact with ARL4D.

Its subcellular location is the nucleus. The protein localises to the nucleolus. It localises to the cell membrane. The protein resides in the cytoplasm. Functionally, small GTP-binding protein which cycles between an inactive GDP-bound and an active GTP-bound form, and the rate of cycling is regulated by guanine nucleotide exchange factors (GEF) and GTPase-activating proteins (GAP). GTP-binding protein that does not act as an allosteric activator of the cholera toxin catalytic subunit. Recruits CYTH1, CYTH2, CYTH3 and CYTH4 to the plasma membrane in GDP-bound form. The chain is ADP-ribosylation factor-like protein 4D (ARL4D) from Bos taurus (Bovine).